The chain runs to 166 residues: PTS system glucose-specific EIIA component (166 aa).

The 105-residue stretch at 34–138 (DPVFAQKMMG…SVISPIIITN (105 aa)) folds into the PTS EIIA type-1 domain. Zn(2+)-binding residues include histidine 71 and histidine 86. Histidine 86 serves as the catalytic Tele-phosphohistidine intermediate; for EIIA activity. Residue histidine 86 is modified to Phosphohistidine; by HPr.

As to quaternary structure, heterodimer with glycerol kinase (glpk). It depends on Zn(2+) as a cofactor.

The protein localises to the cytoplasm. In terms of biological role, the phosphoenolpyruvate-dependent sugar phosphotransferase system (sugar PTS), a major carbohydrate active transport system, catalyzes the phosphorylation of incoming sugar substrates concomitantly with their translocation across the cell membrane. The enzyme II complex composed of PtsG and Crr is involved in glucose transport. This chain is PTS system glucose-specific EIIA component (crr), found in Staphylococcus aureus (strain MSSA476).